The primary structure comprises 898 residues: Alanine--tRNA ligase (898 aa).

Residues His-582, His-586, Cys-685, and His-689 each contribute to the Zn(2+) site.

It belongs to the class-II aminoacyl-tRNA synthetase family. Requires Zn(2+) as cofactor.

The protein localises to the cytoplasm. It catalyses the reaction tRNA(Ala) + L-alanine + ATP = L-alanyl-tRNA(Ala) + AMP + diphosphate. Its function is as follows. Catalyzes the attachment of alanine to tRNA(Ala) in a two-step reaction: alanine is first activated by ATP to form Ala-AMP and then transferred to the acceptor end of tRNA(Ala). Also edits incorrectly charged Ser-tRNA(Ala) and Gly-tRNA(Ala) via its editing domain. This chain is Alanine--tRNA ligase, found in Mycolicibacterium vanbaalenii (strain DSM 7251 / JCM 13017 / BCRC 16820 / KCTC 9966 / NRRL B-24157 / PYR-1) (Mycobacterium vanbaalenii).